A 526-amino-acid chain; its full sequence is Probable Xaa-Pro aminopeptidase MGG_05684 (526 aa).

4 residues coordinate Mn(2+): Asp-285, Asp-296, Glu-447, and Glu-488.

It belongs to the peptidase M24B family. The cofactor is Mn(2+).

The enzyme catalyses Release of any N-terminal amino acid, including proline, that is linked to proline, even from a dipeptide or tripeptide.. In terms of biological role, catalyzes the removal of a penultimate prolyl residue from the N-termini of peptides. The chain is Probable Xaa-Pro aminopeptidase MGG_05684 from Pyricularia oryzae (strain 70-15 / ATCC MYA-4617 / FGSC 8958) (Rice blast fungus).